The following is a 904-amino-acid chain: Envelope glycoprotein (904 aa).

The Extracellular portion of the chain corresponds to 1-726 (MDQDLDGAER…LFDWTSWKDW (726 aa)). Residues Asn-131, Asn-255, Asn-277, Asn-296, Asn-329, Asn-367, Asn-376, Asn-385, Asn-410, Asn-427, Asn-432, Asn-452, Asn-491, Asn-509, and Asn-541 are each glycosylated (N-linked (GlcNAc...) asparagine; by host). The interval 556–576 (AVGLAIFLLVLAIMAITSSLV) is fusion peptide. Positions 588–638 (AKVVERVVQNVSYIAQTQDQFTHLFRNINNRLNVLHHRVSYLEYVEEIRQK) form a coiled coil. Asn-597 carries N-linked (GlcNAc...) asparagine; by host glycosylation. The immunosuppression stretch occupies residues 615–631 (INNRLNVLHHRVSYLEY). Asn-663 and Asn-694 each carry an N-linked (GlcNAc...) asparagine; by host glycan. A coiled-coil region spans residues 676–712 (DEYDKIEEKILKIRVDWLNSSLSDTQDTFGLETSIFD). The chain crosses the membrane as a helical span at residues 727–747 (IKIIIVIIVLWLLIKILLGML). Topologically, residues 748 to 904 (RSCAKVSQNY…AWYEGLRGSQ (157 aa)) are cytoplasmic. Disordered stretches follow at residues 761-783 (PAEE…PASG) and 862-904 (GGTS…RGSQ). The segment covering 878 to 887 (WTGSREQNNP) has biased composition (polar residues).

In terms of assembly, the mature envelope protein (Env) consists of a trimer of SU-TM heterodimers attached by non-covalent interactions or by a labile interchain disulfide bond. Specific enzymatic cleavages in vivo yield mature proteins. Envelope glycoproteins are synthesized as an inactive precursor that is N-glycosylated and processed likely by host cell furin or by a furin-like protease in the Golgi to yield the mature SU and TM proteins. The cleavage site between SU and TM requires the minimal sequence [KR]-X-[KR]-R.

The protein localises to the virion membrane. Its subcellular location is the host cell membrane. In terms of biological role, the surface protein (SU) attaches the virus to the host cell by binding to its receptor. This interaction triggers the refolding of the transmembrane protein (TM) and is thought to activate its fusogenic potential by unmasking its fusion peptide. Fusion occurs at the host cell plasma membrane. The transmembrane protein (TM) acts as a class I viral fusion protein. Under the current model, the protein has at least 3 conformational states: pre-fusion native state, pre-hairpin intermediate state, and post-fusion hairpin state. During viral and target cell membrane fusion, the coiled coil regions (heptad repeats) assume a trimer-of-hairpins structure, positioning the fusion peptide in close proximity to the C-terminal region of the ectodomain. The formation of this structure appears to drive apposition and subsequent fusion of viral and target cell membranes. Membranes fusion leads to delivery of the nucleocapsid into the cytoplasm. This chain is Envelope glycoprotein (env), found in Bovine immunodeficiency virus (strain R29) (BIV).